We begin with the raw amino-acid sequence, 1370 residues long: DNA-directed RNA polymerase subunit beta (1370 aa).

The protein belongs to the RNA polymerase beta chain family. The RNAP catalytic core consists of 2 alpha, 1 beta, 1 beta' and 1 omega subunit. When a sigma factor is associated with the core the holoenzyme is formed, which can initiate transcription.

It catalyses the reaction RNA(n) + a ribonucleoside 5'-triphosphate = RNA(n+1) + diphosphate. Functionally, DNA-dependent RNA polymerase catalyzes the transcription of DNA into RNA using the four ribonucleoside triphosphates as substrates. This chain is DNA-directed RNA polymerase subunit beta, found in Bordetella avium (strain 197N).